Consider the following 378-residue polypeptide: Glutamate 5-kinase (378 aa).

Lys15 is a binding site for ATP. Substrate contacts are provided by Ser56, Asp143, and Asn155. 175 to 176 (SD) lines the ATP pocket. In terms of domain architecture, PUA spans 281–358 (KGTLTIDAGA…PDVAVILGIS (78 aa)).

Belongs to the glutamate 5-kinase family.

The protein localises to the cytoplasm. The enzyme catalyses L-glutamate + ATP = L-glutamyl 5-phosphate + ADP. The protein operates within amino-acid biosynthesis; L-proline biosynthesis; L-glutamate 5-semialdehyde from L-glutamate: step 1/2. Its function is as follows. Catalyzes the transfer of a phosphate group to glutamate to form L-glutamate 5-phosphate. In Bradyrhizobium sp. (strain BTAi1 / ATCC BAA-1182), this protein is Glutamate 5-kinase.